The primary structure comprises 501 residues: Nuclear receptor subfamily 5 group A member 2 (501 aa).

Residues 43–114 (EELCPVCGDK…KCLSVGMKLE (72 aa)) constitute a DNA-binding region (nuclear receptor). 8 residues coordinate Zn(2+): Cys-46, Cys-49, Cys-63, Cys-66, Cys-82, Cys-88, Cys-98, and Cys-101. 2 consecutive NR C4-type zinc fingers follow at residues 46–66 (CPVCGDKVSGYHYGLLTCESC) and 82–106 (CIENQNCQIDKTQRKRCPYCRFQKC). Residues 112-127 (KLEAVRADRMRGGRNK) are C-terminal extension (CTE). The short motif at 128–147 (FGPMYKRDRALKQQKKALIR) is the FTZ-F1 box element. A disordered region spans residues 186-207 (NHTALPPTDYDRSPFVTSPISM). Residues 260 to 499 (SIPHLILELQ…NLLIEMLHAK (240 aa)) enclose the NR LBD domain. A phospholipid derivative is bound by residues 381 to 384 (GATL), Tyr-476, and Lys-480. The interval 488-499 (CNNLLIEMLHAK) is AF-2.

It belongs to the nuclear hormone receptor family. NR5 subfamily. Monomer; Binds DNA as a monomer. Detected in liver and adrenal gland.

It localises to the nucleus. The protein localises to the chromosome. Its function is as follows. Orphan nuclear receptor that binds DNA as a monomer to the 5'-TCAAGGCCA-3' sequence and controls expression of target genes: regulates key biological processes, such as cholesterol and bile acid synthesis pathways, as well as cartilage, liver and pancreas morphogenesis. Ligand-binding causes conformational change which causes recruitment of coactivators, promoting target gene activation. The specific ligand is unknown, but specific phospholipids, such as phosphatidylethanolamine, phosphatidylserine, dilauroyl phosphatidylcholine and diundecanoyl phosphatidylcholine can act as ligand in vitro. Acts as a pioneer transcription factor, which unwraps target DNA from histones and elicits local opening of closed chromatin. Involved in the formation of connective tissue in lower jaw. The chain is Nuclear receptor subfamily 5 group A member 2 from Gallus gallus (Chicken).